A 318-amino-acid chain; its full sequence is Zinc chaperone YjiA (318 aa).

11 to 19 (GFLGAGKTT) is a GTP binding site. Zn(2+)-binding residues include Glu-37, Glu-42, Cys-66, Glu-74, and His-114. The CXCC motif signature appears at 64-67 (CICC). Asp-161 provides a ligand contact to GTP. Zn(2+) contacts are provided by Glu-167, His-170, and His-187. Positions 224 to 315 (ISSIVVELDY…EEEIRAAFAG (92 aa)) constitute a CobW C-terminal domain.

The protein belongs to the SIMIBI class G3E GTPase family. ZNG1 subfamily. Monomer in the apo form. Metal binding induces oligomerization. Forms homodimers and higher oligomers.

The enzyme catalyses GTP + H2O = GDP + phosphate + H(+). With respect to regulation, GTPase activity is inhibited by metal binding. Activity is decreased in the presence of Co(II) or Ni(II), and is completely inhibited in the presence of Zn(II). Functionally, zinc chaperone that directly transfers zinc cofactor to target proteins, thereby activating them. Zinc is transferred from the CXCC motif in the GTPase domain to the zinc binding site in target proteins in a process requiring GTP hydrolysis. This Escherichia coli (strain K12) protein is Zinc chaperone YjiA (yjiA).